The primary structure comprises 83 residues: Kappa-actitoxin-Aer3a (83 aa).

An N-terminal signal peptide occupies residues 1-22 (MKGQMIICLVLIALCMSVVVMA). The propeptide occupies 23–49 (QNLRAEELEKANPKDERVRSFERNQKR). Residues 51–83 (CKDYLPKSECTQFRCRTSMKYKYTNCKKTCGTC) form the ShKT domain. Intrachain disulfides connect Cys51/Cys83, Cys60/Cys76, and Cys65/Cys80.

It belongs to the sea anemone type 1 potassium channel toxin family. Type 1a subfamily.

It is found in the secreted. The protein resides in the nematocyst. In terms of biological role, specifically, dose-dependently and potently blocks the voltage-gated potassium channel Kv1.1/KCNA1 (Ki=1.6 pM). Moderately blocks potassium channel heterotetramers formed by 3 subunits of Kv1.1/KCNA1 and 1 subunit of Kv1.2/KCNA2 (Ki=56 nM) and weakly blocks those formed by 2 subunits of Kv1.1/KCNA1 and 2 subunits of Kv1.2/KCNA2 (Ki=14 nM). This is Kappa-actitoxin-Aer3a from Anemonia erythraea (Sea anemone).